An 89-amino-acid polypeptide reads, in one-letter code: Small ribosomal subunit protein uS17 (89 aa).

This sequence belongs to the universal ribosomal protein uS17 family. As to quaternary structure, part of the 30S ribosomal subunit.

Its function is as follows. One of the primary rRNA binding proteins, it binds specifically to the 5'-end of 16S ribosomal RNA. The polypeptide is Small ribosomal subunit protein uS17 (Bdellovibrio bacteriovorus (strain ATCC 15356 / DSM 50701 / NCIMB 9529 / HD100)).